The sequence spans 184 residues: ATP synthase subunit b, chloroplastic (184 aa).

Residues 27-49 (LATNLINLSVVLGVLIFFGKGVL) traverse the membrane as a helical segment.

It belongs to the ATPase B chain family. As to quaternary structure, F-type ATPases have 2 components, F(1) - the catalytic core - and F(0) - the membrane proton channel. F(1) has five subunits: alpha(3), beta(3), gamma(1), delta(1), epsilon(1). F(0) has four main subunits: a(1), b(1), b'(1) and c(10-14). The alpha and beta chains form an alternating ring which encloses part of the gamma chain. F(1) is attached to F(0) by a central stalk formed by the gamma and epsilon chains, while a peripheral stalk is formed by the delta, b and b' chains.

It localises to the plastid. It is found in the chloroplast thylakoid membrane. F(1)F(0) ATP synthase produces ATP from ADP in the presence of a proton or sodium gradient. F-type ATPases consist of two structural domains, F(1) containing the extramembraneous catalytic core and F(0) containing the membrane proton channel, linked together by a central stalk and a peripheral stalk. During catalysis, ATP synthesis in the catalytic domain of F(1) is coupled via a rotary mechanism of the central stalk subunits to proton translocation. In terms of biological role, component of the F(0) channel, it forms part of the peripheral stalk, linking F(1) to F(0). This is ATP synthase subunit b, chloroplastic from Lactuca sativa (Garden lettuce).